Consider the following 164-residue polypeptide: Vesiculogenesis and immune response regulator (164 aa).

In terms of processing, could be O-mannosylated. Is likely mannosylated on Thr-61 when overexpressed in M.smegmatis.

The protein resides in the cell inner membrane. It localises to the cytoplasm. In terms of biological role, virulence factor that regulates vesiculogenesis. Acts by regulating the production of mycobacterial membrane vesicles (MV) bearing Toll-like receptor 2 (TLR2) ligands, including the lipoproteins LpqH, a major host TLR2 agonist, and SodC. By restraining the release of most of the material that activates host cells through TLR2, VirR reduces the immunostimulant potential of M.tuberculosis and increases its virulence. May contribute to cell envelope integrity. Its function is as follows. When overexpressed in M.smegmatis, it modulates the production of IL-10, IL-12 p40 and TNF-alpha by RAW264.7 macrophages and it decreases the killing of M.smegmatis. This Mycobacterium tuberculosis (strain ATCC 25618 / H37Rv) protein is Vesiculogenesis and immune response regulator.